Consider the following 464-residue polypeptide: Soluble pyridine nucleotide transhydrogenase (464 aa).

Position 35–44 (35–44 (DDRPQVGGNC)) interacts with FAD.

Belongs to the class-I pyridine nucleotide-disulfide oxidoreductase family. Requires FAD as cofactor.

The protein resides in the cytoplasm. It catalyses the reaction NAD(+) + NADPH = NADH + NADP(+). Its function is as follows. Conversion of NADPH, generated by peripheral catabolic pathways, to NADH, which can enter the respiratory chain for energy generation. This is Soluble pyridine nucleotide transhydrogenase from Azotobacter vinelandii (strain DJ / ATCC BAA-1303).